The chain runs to 361 residues: Phospho-N-acetylmuramoyl-pentapeptide-transferase (361 aa).

The next 10 helical transmembrane spans lie at L28 to L48, T74 to L94, T99 to A119, S133 to D153, L168 to S188, V203 to I223, T236 to F256, V263 to I283, I288 to V308, and K338 to L358.

Belongs to the glycosyltransferase 4 family. MraY subfamily. Requires Mg(2+) as cofactor.

It localises to the cell inner membrane. The enzyme catalyses UDP-N-acetyl-alpha-D-muramoyl-L-alanyl-gamma-D-glutamyl-meso-2,6-diaminopimeloyl-D-alanyl-D-alanine + di-trans,octa-cis-undecaprenyl phosphate = di-trans,octa-cis-undecaprenyl diphospho-N-acetyl-alpha-D-muramoyl-L-alanyl-D-glutamyl-meso-2,6-diaminopimeloyl-D-alanyl-D-alanine + UMP. The protein operates within cell wall biogenesis; peptidoglycan biosynthesis. In terms of biological role, catalyzes the initial step of the lipid cycle reactions in the biosynthesis of the cell wall peptidoglycan: transfers peptidoglycan precursor phospho-MurNAc-pentapeptide from UDP-MurNAc-pentapeptide onto the lipid carrier undecaprenyl phosphate, yielding undecaprenyl-pyrophosphoryl-MurNAc-pentapeptide, known as lipid I. This is Phospho-N-acetylmuramoyl-pentapeptide-transferase from Rickettsia massiliae (strain Mtu5).